The sequence spans 945 residues: Xylosyltransferase 1 (945 aa).

The Cytoplasmic portion of the chain corresponds to methionine 1 to alanine 17. A helical; Signal-anchor for type II membrane protein transmembrane segment spans residues leucine 18–leucine 38. The Lumenal segment spans residues aspartate 39 to arginine 945. Residues alanine 42–isoleucine 245 are disordered. Positions arginine 76 to glutamate 103 are enriched in gly residues. Residues lysine 131–glutamate 147 are compositionally biased toward basic and acidic residues. The segment covering valine 149–threonine 158 has biased composition (polar residues). Basic and acidic residues predominate over residues histidine 163–lysine 190. Asparagine 212 carries N-linked (GlcNAc...) asparagine glycosylation. Residues threonine 235–isoleucine 245 are compositionally biased toward basic and acidic residues. 4 disulfides stabilise this stretch: cysteine 243–cysteine 271, cysteine 287–cysteine 528, cysteine 547–cysteine 560, and cysteine 549–cysteine 558. UDP-alpha-D-xylose contacts are provided by residues valine 319, aspartate 347, and threonine 376–tryptophan 378. N-linked (GlcNAc...) asparagine glycosylation is present at asparagine 407. Aspartate 480 to tryptophan 481 contributes to the UDP-alpha-D-xylose binding site. UDP-alpha-D-xylose-binding positions include serine 561 and arginine 584 to lysine 585. 2 disulfides stabilise this stretch: cysteine 661/cysteine 913 and cysteine 906/cysteine 919. The N-linked (GlcNAc...) asparagine glycan is linked to asparagine 763. Residues serine 926–arginine 945 are disordered.

Belongs to the glycosyltransferase 14 family. XylT subfamily. Monomer. A divalent metal cation serves as cofactor. In terms of processing, contains 7 disulfide bonds. N-glycosylated.

Its subcellular location is the golgi apparatus membrane. It catalyses the reaction UDP-alpha-D-xylose + L-seryl-[protein] = 3-O-(beta-D-xylosyl)-L-seryl-[protein] + UDP + H(+). It functions in the pathway glycan metabolism; chondroitin sulfate biosynthesis. The protein operates within glycan metabolism; heparan sulfate biosynthesis. In terms of biological role, catalyzes the first step in the biosynthesis of chondroitin sulfate and dermatan sulfate proteoglycans, such as DCN. Transfers D-xylose from UDP-D-xylose to specific serine residues of the core protein. Required for normal maturation of chondrocytes during bone development, normal onset of ossification and normal embryonic and postnatal skeleton development, especially of the long bones. The sequence is that of Xylosyltransferase 1 (XYLT1) from Pan troglodytes (Chimpanzee).